A 169-amino-acid chain; its full sequence is Calcium-binding protein G (169 aa).

EF-hand domains lie at 9–44 (KIFQ…KMNG), 60–83 (VDMD…QAKK), 92–127 (AALA…QGYN), and 133–162 (DYVL…KRLA). 10 residues coordinate Ca(2+): aspartate 105, aspartate 107, aspartate 109, lysine 111, glutamate 116, aspartate 140, aspartate 142, aspartate 144, tyrosine 146, and glutamate 151.

The chain is Calcium-binding protein G (cbpG) from Dictyostelium discoideum (Social amoeba).